Here is a 367-residue protein sequence, read N- to C-terminus: Peptide chain release factor 2 (367 aa).

At Q250 the chain carries N5-methylglutamine.

This sequence belongs to the prokaryotic/mitochondrial release factor family. Methylated by PrmC. Methylation increases the termination efficiency of RF2.

The protein resides in the cytoplasm. Functionally, peptide chain release factor 2 directs the termination of translation in response to the peptide chain termination codons UGA and UAA. This chain is Peptide chain release factor 2, found in Mycobacteroides abscessus (strain ATCC 19977 / DSM 44196 / CCUG 20993 / CIP 104536 / JCM 13569 / NCTC 13031 / TMC 1543 / L948) (Mycobacterium abscessus).